A 436-amino-acid polypeptide reads, in one-letter code: Xylose isomerase (436 aa).

Catalysis depends on residues His-100 and Asp-103. Residues Glu-231, Glu-267, His-270, Asp-295, Asp-306, Asp-308, and Asp-338 each contribute to the Mg(2+) site.

This sequence belongs to the xylose isomerase family. Homotetramer. Mg(2+) serves as cofactor.

It is found in the cytoplasm. The enzyme catalyses alpha-D-xylose = alpha-D-xylulofuranose. This Rhizobium etli (strain ATCC 51251 / DSM 11541 / JCM 21823 / NBRC 15573 / CFN 42) protein is Xylose isomerase.